A 330-amino-acid chain; its full sequence is Glycerol-3-phosphate dehydrogenase [NAD(P)+] (330 aa).

S10, W11, R31, and K104 together coordinate NADPH. K104, G131, and S133 together coordinate sn-glycerol 3-phosphate. A135 contributes to the NADPH binding site. Residues K186, D239, S249, R250, and N251 each contribute to the sn-glycerol 3-phosphate site. K186 serves as the catalytic Proton acceptor. R250 contributes to the NADPH binding site. Positions 274 and 276 each coordinate NADPH.

It belongs to the NAD-dependent glycerol-3-phosphate dehydrogenase family.

The protein localises to the cytoplasm. It carries out the reaction sn-glycerol 3-phosphate + NAD(+) = dihydroxyacetone phosphate + NADH + H(+). The enzyme catalyses sn-glycerol 3-phosphate + NADP(+) = dihydroxyacetone phosphate + NADPH + H(+). It participates in membrane lipid metabolism; glycerophospholipid metabolism. Its function is as follows. Catalyzes the reduction of the glycolytic intermediate dihydroxyacetone phosphate (DHAP) to sn-glycerol 3-phosphate (G3P), the key precursor for phospholipid synthesis. In Thermoanaerobacter sp. (strain X514), this protein is Glycerol-3-phosphate dehydrogenase [NAD(P)+].